The sequence spans 366 residues: MRPAQASIDLEALRHNYRLAKRLGGSKALAVVKADAYGHGAVPCAQALEPEADGFAVACIEEALELRQAGIRAPILLLEGFFEHDELRLIAEHDLWTVAATPQQVRALAAFQSPRPLRVWLKMDSGMHRLGLSPEDFRAAWLRLRGLPQIASLVLMTHLARADELDCSRTDEQAVAFALTAGGMRAETSLRNSPGLLGWPALRNDWSRPGLMLYGANPFPQDTENTAQLRPVMTLRSRIILVRDLPVGEPVGYGARFVAERPTRVGVVAMGYADGYPQFAPNGTPVLVDGQVCPLIGRVSMDMLTVDLTDHPQADIGATVQLWGQAPRVGPLATQCNVSAYQLLCGLKRLPRTYVGSAAVGEVAAR.

The active-site Proton acceptor; specific for D-alanine is the Lys33. Lys33 bears the N6-(pyridoxal phosphate)lysine mark. Arg129 serves as a coordination point for substrate. Tyr253 serves as the catalytic Proton acceptor; specific for L-alanine. Met301 is a substrate binding site.

Belongs to the alanine racemase family. Pyridoxal 5'-phosphate serves as cofactor.

The enzyme catalyses L-alanine = D-alanine. The protein operates within amino-acid biosynthesis; D-alanine biosynthesis; D-alanine from L-alanine: step 1/1. Functionally, catalyzes the interconversion of L-alanine and D-alanine. May also act on other amino acids. The protein is Alanine racemase (alr) of Xanthomonas oryzae pv. oryzae (strain KACC10331 / KXO85).